A 1238-amino-acid chain; its full sequence is Anion exchange protein 2 (1238 aa).

Positions Met-1–Gly-238 are disordered. At Met-1–Gln-704 the chain is on the cytoplasmic side. 2 stretches are compositionally biased toward basic and acidic residues: residues Asp-37–Glu-49 and Gly-58–Arg-75. Basic residues-rich tracts occupy residues Gln-76–Leu-85 and Arg-94–Pro-110. Over residues Thr-120–Glu-133 the composition is skewed to acidic residues. Phosphoserine is present on residues Ser-132, Ser-144, Ser-170, and Ser-172. A compositionally biased stretch (polar residues) spans Thr-141–Phe-154. Residues Gly-205–Ser-215 show a composition bias toward gly residues. Ser-239 carries the post-translational modification Phosphoserine. Thr-253 carries the post-translational modification Phosphothreonine. Residue Lys-270 is modified to N6-methyllysine. The interval Val-277–Lys-315 is disordered. Positions Val-280–Ala-289 are enriched in basic residues. Ser-439 carries the phosphoserine modification. Residues Ser-445–Ile-466 are disordered. Helical transmembrane passes span Cys-705 to Gly-728, Leu-734 to Phe-771, Val-791 to Val-813, and Ile-823 to Phe-844. The segment at Cys-705–Val-1238 is membrane (anion exchange). Over Gln-845–Thr-897 the chain is Extracellular. Asn-856, Asn-865, and Asn-879 each carry an N-linked (GlcNAc...) asparagine glycan. Residues Ser-858–Thr-869 are compositionally biased toward polar residues. Residues Ser-858–Gln-892 form a disordered region. The chain crosses the membrane as a helical span at residues Ala-898–Leu-915. Over Arg-916–Arg-930 the chain is Cytoplasmic. The next 5 membrane-spanning stretches (helical) occupy residues Val-931–Ile-951, Pro-985–Met-1007, Leu-1033–Ala-1054, Val-1088–Tyr-1133, and Met-1160–Leu-1196. Cys-1170 carries the S-palmitoyl cysteine lipid modification.

It belongs to the anion exchanger (TC 2.A.31) family. In terms of tissue distribution, expressed in the cochlea (at protein level).

Its subcellular location is the apical cell membrane. The protein localises to the basolateral cell membrane. The enzyme catalyses hydrogencarbonate(in) + chloride(out) = hydrogencarbonate(out) + chloride(in). In terms of biological role, sodium-independent anion exchanger which mediates the electroneutral exchange of chloride for bicarbonate ions across the cell membrane. Plays an important role in osteoclast differentiation and function. Regulates bone resorption and calpain-dependent actin cytoskeleton organization in osteoclasts via anion exchange-dependent control of pH. Essential for intracellular pH regulation in CD8(+) T-cells upon CD3 stimulation, modulating CD8(+) T-cell response. The chain is Anion exchange protein 2 (SLC4A2) from Cavia porcellus (Guinea pig).